Reading from the N-terminus, the 622-residue chain is Glucose 1,6-bisphosphate synthase (622 aa).

Residues arginine 73 and serine 175 each coordinate alpha-D-glucose 1,6-bisphosphate. The active-site Phosphoserine intermediate is the serine 175. Mg(2+) is bound by residues serine 175, aspartate 332, and aspartate 334. A Phosphoserine modification is found at serine 175. Aspartate 336, arginine 337, glutamate 434, serine 436, and lysine 448 together coordinate alpha-D-glucose 1,6-bisphosphate.

It belongs to the phosphohexose mutase family.

It is found in the cytoplasm. It localises to the cytosol. The catalysed reaction is (2R)-3-phospho-glyceroyl phosphate + alpha-D-glucose 1-phosphate = alpha-D-glucose 1,6-bisphosphate + (2R)-3-phosphoglycerate + H(+). It carries out the reaction alpha-D-glucose 6-phosphate + (2R)-3-phospho-glyceroyl phosphate = alpha-D-glucose 1,6-bisphosphate + (2R)-3-phosphoglycerate + H(+). It catalyses the reaction (2R)-3-phospho-glyceroyl phosphate + alpha-D-ribose 1-phosphate = alpha-D-ribose 1,5-bisphosphate + (2R)-3-phosphoglycerate + H(+). The enzyme catalyses 2-deoxy-alpha-D-ribose 1-phosphate + (2R)-3-phospho-glyceroyl phosphate = 2-deoxy-alpha-D-ribose 1,5-bisphosphate + (2R)-3-phosphoglycerate + H(+). The catalysed reaction is (2R)-3-phospho-glyceroyl phosphate + alpha-D-mannose 1-phosphate = alpha-D-mannose 1,6-bisphosphate + (2R)-3-phosphoglycerate + H(+). Its function is as follows. Glucose 1,6-bisphosphate synthase using 1,3-bisphosphoglycerate as a phosphate donor and a series of 1-phosphate sugars, including glucose 1-phosphate, mannose 1-phosphate, ribose 1-phosphate and deoxyribose 1-phosphate, as acceptors. In vitro, also exhibits very low phosphopentomutase and phosphoglucomutase activity which are most probably not physiologically relevant. The chain is Glucose 1,6-bisphosphate synthase from Homo sapiens (Human).